The primary structure comprises 678 residues: Penicillin-binding protein activator LpoA (678 aa).

The signal sequence occupies residues 1–26 (MVPSTFSRLKAARCLPVVLAALIFAG). C27 carries N-palmitoyl cysteine lipidation. The S-diacylglycerol cysteine moiety is linked to residue C27. Disordered stretches follow at residues 304–338 (AEQP…SVPV) and 495–530 (IALT…QFTN). The span at 513–529 (TTNNPTLQTTPTDDQFT) shows a compositional bias: low complexity.

The protein belongs to the LpoA family. As to quaternary structure, interacts with PBP1a.

It localises to the cell outer membrane. In terms of biological role, regulator of peptidoglycan synthesis that is essential for the function of penicillin-binding protein 1A (PBP1a). This chain is Penicillin-binding protein activator LpoA, found in Escherichia coli O6:H1 (strain CFT073 / ATCC 700928 / UPEC).